An 86-amino-acid chain; its full sequence is MNMTENANTADVSGYSFEKAVAELESIVARLERGDVALDESIAIYERGEALKKHCETLLNAAEKRIEKIRLDRAGKPQGVEPLDGE.

This sequence belongs to the XseB family. In terms of assembly, heterooligomer composed of large and small subunits.

Its subcellular location is the cytoplasm. It carries out the reaction Exonucleolytic cleavage in either 5'- to 3'- or 3'- to 5'-direction to yield nucleoside 5'-phosphates.. Functionally, bidirectionally degrades single-stranded DNA into large acid-insoluble oligonucleotides, which are then degraded further into small acid-soluble oligonucleotides. The chain is Exodeoxyribonuclease 7 small subunit from Agrobacterium fabrum (strain C58 / ATCC 33970) (Agrobacterium tumefaciens (strain C58)).